A 324-amino-acid chain; its full sequence is tRNA pseudouridine synthase B (324 aa).

The Nucleophile role is filled by Asp49.

This sequence belongs to the pseudouridine synthase TruB family. Type 1 subfamily.

It carries out the reaction uridine(55) in tRNA = pseudouridine(55) in tRNA. Its function is as follows. Responsible for synthesis of pseudouridine from uracil-55 in the psi GC loop of transfer RNAs. This is tRNA pseudouridine synthase B from Tolumonas auensis (strain DSM 9187 / NBRC 110442 / TA 4).